A 282-amino-acid chain; its full sequence is Putative phosphatase in upp 3'region (282 aa).

Asp-17 serves as the catalytic Nucleophile. Asp-17 lines the Mg(2+) pocket. Residue Leu-18 coordinates phosphate. Mg(2+) is bound at residue Asp-19. Residues Thr-53 to Gly-54 and Lys-211 each bind phosphate. Mg(2+) contacts are provided by Asp-234 and Ser-235. Asn-237 contributes to the phosphate binding site.

The protein belongs to the HAD-like hydrolase superfamily. Cof family. Mg(2+) serves as cofactor.

This Metamycoplasma hominis (Mycoplasma hominis) protein is Putative phosphatase in upp 3'region.